We begin with the raw amino-acid sequence, 299 residues long: Protease HtpX homolog (299 aa).

Helical transmembrane passes span 15–35 (ILLL…GYLF) and 39–59 (GLGG…SMIF). His143 is a Zn(2+) binding site. The active site involves Glu144. His147 is a Zn(2+) binding site. Helical transmembrane passes span 158-178 (IAVA…RMMW) and 198-218 (IIML…ATLV). Residue Glu227 coordinates Zn(2+).

It belongs to the peptidase M48B family. Requires Zn(2+) as cofactor.

The protein localises to the cell membrane. This is Protease HtpX homolog from Streptococcus pneumoniae (strain P1031).